Reading from the N-terminus, the 398-residue chain is MANLRKTHPLLKIANDALVDLPTPTSISAWWNFGSLLGLCLVAQIITGLFLAMHYTADITTAFSSVAHICRDVNYGWLIRNLHANGASFFFICVYLHIGRGLYYGSYLYKETWNIGVILLLLVMMTAFVGYVLPWGQMSFWGATVITNLLSAVPYVGNMLVEWIWGGFSVDNATLTRFFAFHFLFPFLIAAFTIIHLLFLHETGSTNPVGLNSDADKIPFHPYFSYKDLLGFAILLIALISLSLFAPNLLGDPDNFTPANPLVTPPHIKPEWYFLFAYAILRSIPNKLGGVLALLASILILMLVPILHTSKQRSLTFRPFTQLLFWLLVADVIILTWIGGLPVEHPYVVIGQIASFLYFFLFLFLIPLSGWLENKALKWSCIDSSASERRSCKPDVGG.

Transmembrane regions (helical) follow at residues 33 to 53 (FGSL…FLAM), 77 to 98 (WLIR…YLHI), 113 to 133 (WNIG…GYVL), and 178 to 198 (FFAF…IHLL). The heme b site is built by His-83 and His-97. Residues His-182 and His-196 each contribute to the heme b site. His-201 lines the a ubiquinone pocket. 4 consecutive transmembrane segments (helical) span residues 226-246 (YKDL…SLFA), 288-308 (LGGV…PILH), 320-340 (FTQL…WIGG), and 347-367 (YVVI…FLIP).

It belongs to the cytochrome b family. In terms of assembly, the cytochrome bc1 complex contains 3 respiratory subunits (MT-CYB, CYC1 and UQCRFS1), 2 core proteins (UQCRC1 and UQCRC2) and probably 6 low-molecular weight proteins. Heme b serves as cofactor.

It localises to the mitochondrion inner membrane. Component of the ubiquinol-cytochrome c reductase complex (complex III or cytochrome b-c1 complex) that is part of the mitochondrial respiratory chain. The b-c1 complex mediates electron transfer from ubiquinol to cytochrome c. Contributes to the generation of a proton gradient across the mitochondrial membrane that is then used for ATP synthesis. In Channa asiatica (Small snakehead), this protein is Cytochrome b (mt-cyb).